We begin with the raw amino-acid sequence, 1441 residues long: MSTIFQDLVDSTVIKNAVQGQFTSLVSNNLVVSKVNSLHLFEIEKIQKDESSFPLDDSLQNEFSTSIIDESQAFMETNMHLIRTNEQTTYVLRLVSQVKVFGTITEISALKGKGSNGCDLLIMLTDYAKVSTLEWDMQSQSFVTNSLHYYEDVKSSNICSSHTPTQLLVDPDSDCCLLRFLTDMMAIIPYPANEDLDMEEAAIENSKISSSYAYKPSFVLASSQLDASISRILDVKFLYGYREPTLAILYSPEQTSTVTLPLRKDTVLFSLVTLDLEQRASAVITTIQSLPYDIYASVSIPTPLGGSLLLGGNELIYVDSAGRTVGIGVNSYYSKCTDFPLQDQSDFNLELEGTIAIPLTSSKTETPFVVLVHTSGQFFYLDFLLDGKSVKGLSLQALDLEINDDFLKSGITCAVPAGENLVFLGSQTTDSYLLRWSRRTTNEEVRLDEGDDTLYGTNDAEMDDMLDIYETDESVGSKRKIAYENGPLRLEICDVLTNIGPITDFAVGKAGSYSYFPQDNHGPLELVGTAGADGAGGLVVFRRNIFPLIAGEFQFDGCEALWTVSISGKLRNMKSRIQAQYSNPELETYLVLSKEKESFIFLAGETFDEVQHSDFSKDSKTLNVGSLLSGMRMVQICPTSLRVYDSNLRLTQLFNFSKKQIVVSTSICDPCIIVVFLGGGIALYKMDLKSQRLIKTDLQNRLSDVKTASLVSPDSSALFAKLFTYNETLNAKGQIANGMNDSASETDLDIQPNHKTSNNDQMGYDQSVSADDVPEVDNTIVTEKNVSNLDQESLEKHPILFALTDEGKLKVYNLADFSLLMECDVFDLPPTLFNGMESERTYFNKESSQELVELLVADLGDDFKEPHLFLRSRLNEITVYKAFLYSNTDKHKNLLAFAKVPQETMTREFQANVGTPRDAESTMEKKASSSVDHLKMTALEVVGNHSAVFVTGRKPFLILSTLHSNAKFFPISSNIPILSVAPFHAHHAPQGYIYVDENSFIRICKFQEDFEYDNKWPYKKVSLGKQINGIAYHPTKMVYAVGSAVPIEFKVTDEDGNEPYAITDDNDYLPMANTGSLDLVSPLTWTVIDSYEFQQFEIPLSVALVNLEVSETTKLRKPYIAVGTSITKGEDIAVRGSTYLFEIIDVVPQPGRPETRHKLKLVTREEIKGTVAVVCEVDGYLLSGQGQKVIVRALEDEDHLVGVSFIDLGSYTLSAKCLRNLLLFGDVRQNVTFVGFAEEPYRMTLFSKGQEALNVSAADFLVQGENLYFVVADTSGNLRLLAYDPENPESHSGERLVTRGDFHIGNVITAMTILPKEKKHQNAEYGYDTGDDFSCVMVNSDGGLQMLVPISDRVYRRLNIIQNYLANRVNTIGGLNPKSYRLITSPSNLTNPTRRILDGMLIDYFTYMSVAHRHEMAHKCGVPVSTIMNDLVELDEALSYM.

The interval 741-763 (DSASETDLDIQPNHKTSNNDQMG) is disordered. The segment covering 753–763 (NHKTSNNDQMG) has biased composition (polar residues).

The protein belongs to the CFT1 family.

The protein resides in the cytoplasm. Its subcellular location is the nucleus. Its function is as follows. RNA-binding component of the cleavage and polyadenylation factor (CPF) complex, which plays a key role in polyadenylation-dependent pre-mRNA 3'-end formation and cooperates with cleavage factors including the CFIA complex and NAB4/CFIB. Involved in poly(A) site recognition. May be involved in coupling transcription termination and mRNA 3'-end formation. This chain is Protein cft1 (cft1), found in Schizosaccharomyces pombe (strain 972 / ATCC 24843) (Fission yeast).